Here is a 234-residue protein sequence, read N- to C-terminus: Triosephosphate isomerase (234 aa).

Position 8–10 (8–10) interacts with substrate; the sequence is NFK. The Electrophile role is filled by His-90. Glu-159 acts as the Proton acceptor in catalysis. The substrate site is built by Gly-165 and Ser-197.

Belongs to the triosephosphate isomerase family. In terms of assembly, homodimer.

The protein resides in the cytoplasm. It catalyses the reaction D-glyceraldehyde 3-phosphate = dihydroxyacetone phosphate. The protein operates within carbohydrate biosynthesis; gluconeogenesis. It functions in the pathway carbohydrate degradation; glycolysis; D-glyceraldehyde 3-phosphate from glycerone phosphate: step 1/1. In terms of biological role, involved in the gluconeogenesis. Catalyzes stereospecifically the conversion of dihydroxyacetone phosphate (DHAP) to D-glyceraldehyde-3-phosphate (G3P). In Helicobacter pylori (strain G27), this protein is Triosephosphate isomerase.